The sequence spans 80 residues: UPF0270 protein AHA_0994 (80 aa).

Belongs to the UPF0270 family.

This is UPF0270 protein AHA_0994 from Aeromonas hydrophila subsp. hydrophila (strain ATCC 7966 / DSM 30187 / BCRC 13018 / CCUG 14551 / JCM 1027 / KCTC 2358 / NCIMB 9240 / NCTC 8049).